We begin with the raw amino-acid sequence, 256 residues long: Non-structural protein 1 (256 aa).

The protein resides in the host cytoplasm. Its subcellular location is the host perinuclear region. In terms of biological role, plays a role in inhibition of the host innate immune system by counteracting the type I interferon signaling. This chain is Non-structural protein 1, found in Infectious salmon anemia virus (isolate Atlantic salmon/Norway/810/9/99) (ISAV).